The sequence spans 275 residues: Protein COFACTOR ASSEMBLY OF COMPLEX C SUBUNIT B CCB2, chloroplastic (275 aa).

A chloroplast-targeting transit peptide spans 1-19 (MSIQICNFPFHPKFALQPR). Topologically, residues 20–65 (AQRSTRIFARTENDSPQSKTSDQQLNLSVLRFTFGIPGFDESYLPR) are stromal. A helical transmembrane segment spans residues 66-86 (WIGYGFGSLLLLNHFSASAPI). At 87 to 93 (SESQMRS) the chain is on the lumenal side. A helical membrane pass occupies residues 94 to 114 (EALGLSLAAFSIALPYIGKFL). At 115 to 275 (KGSVVEQRSL…IGAMAEKFRG (161 aa)) the chain is on the stromal side.

Its subcellular location is the plastid. It localises to the chloroplast thylakoid membrane. Functionally, required for the biogenesis and accumulation of native cytochrome b6 in the thylakoid membrane. Controls the conversion of apocytochrome b6 to holocytochrome b6. Required for covalent binding of the c-type heme to cytochrome b6. In Arabidopsis thaliana (Mouse-ear cress), this protein is Protein COFACTOR ASSEMBLY OF COMPLEX C SUBUNIT B CCB2, chloroplastic.